Consider the following 156-residue polypeptide: Arginine repressor (156 aa).

The protein belongs to the ArgR family.

The protein resides in the cytoplasm. It participates in amino-acid biosynthesis; L-arginine biosynthesis [regulation]. Its function is as follows. Regulates arginine biosynthesis genes. This is Arginine repressor from Shewanella oneidensis (strain ATCC 700550 / JCM 31522 / CIP 106686 / LMG 19005 / NCIMB 14063 / MR-1).